Reading from the N-terminus, the 325-residue chain is Iodotyrosine dehalogenase 1 homolog (325 aa).

A helical transmembrane segment spans residues 42–62 (VLNVLFTLGVILFVIYQVASL). Topologically, residues 63–325 (LHRMNKRVEK…KPVEHITKLY (263 aa)) are cytoplasmic. FMN-binding positions include 135–139 (RRSCR), 163–164 (SV), 273–275 (VTS), and Arg315.

This sequence belongs to the nitroreductase family. FMN serves as cofactor. Expressed in body-wall, anal depressor and vulval muscles.

It localises to the membrane. May contribute to coordination of muscle contraction as regulatory subunit of the nonessential sup-9 potassium channel complex. May act downstream of sup-10. The chain is Iodotyrosine dehalogenase 1 homolog from Caenorhabditis elegans.